A 406-amino-acid chain; its full sequence is Kelch domain-containing protein 2 (406 aa).

Kelch repeat units lie at residues 31–85, 92–136, 148–207, 221–259, 271–311, and 322–359; these read ERSG…NTEG, SGSC…ERID, LGVW…AWSQ, HACATVGNKGFVFGGRYRDARMNDLHYLNLDTWEWNELI, HSLT…IQFN, and HTACASDEGEVIVFGGCANNLLVHHRAAHSNEVLIFSV.

Component of a CRL2(KLHDC2) E3 ubiquitin-protein ligase complex, also named ECS(KLHDC2) complex, composed of CUL2, Elongin BC (ELOB and ELOC), RBX1 and substrate-specific adapter KLHDC2. May form oligomers as a KLHDC2-ELOB-ELOC complex; this interaction is autoinhibitory for the E3 ligase complex as the substrate-binding site of KLHDC2 is blocked in the oligomer. Interacts with CREB3; interaction is direct and specific as it does not interact with CREB1, ATF4, ATF6, JUN, FOS, CEBPA or herpes simplex virus transactivator VP16. In terms of processing, autoubiquitinated by the CRL2(KLHDC2) E3 ligase complex.

It localises to the nucleus. Its pathway is protein modification; protein ubiquitination. Substrate-recognition component of a Cul2-RING (CRL2) E3 ubiquitin-protein ligase complex of the DesCEND (destruction via C-end degrons) pathway, which recognizes a C-degron located at the extreme C terminus of target proteins, leading to their ubiquitination and degradation. The C-degron recognized by the DesCEND pathway is usually a motif of less than ten residues and can be present in full-length proteins, truncated proteins or proteolytically cleaved forms. The CRL2(KLHDC2) complex specifically recognizes proteins with a diglycine (Gly-Gly) at the C-terminus, leading to their ubiquitination and degradation. The CRL2(KLHDC2) complex mediates ubiquitination and degradation of truncated SELENOK and SELENOS selenoproteins produced by failed UGA/Sec decoding, which end with a diglycine. The CRL2(KLHDC2) complex also recognizes proteolytically cleaved proteins ending with Gly-Gly, such as the N-terminal fragment of USP1, leading to their degradation. May also act as an indirect repressor of CREB3-mediated transcription by interfering with CREB3-DNA-binding. This Rattus norvegicus (Rat) protein is Kelch domain-containing protein 2.